Here is a 50-residue protein sequence, read N- to C-terminus: Photosystem II reaction center protein M (50 aa).

A helical transmembrane segment spans residues 6-26; that stretch reads FGFVASLLFVGVPTIFLIGLF.

This sequence belongs to the PsbM family. PSII is composed of 1 copy each of membrane proteins PsbA, PsbB, PsbC, PsbD, PsbE, PsbF, PsbH, PsbI, PsbJ, PsbK, PsbL, PsbM, PsbT, PsbX, PsbY, Psb30/Ycf12, peripheral proteins PsbO, CyanoQ (PsbQ), PsbU, PsbV and a large number of cofactors. It forms dimeric complexes.

Its subcellular location is the cellular thylakoid membrane. One of the components of the core complex of photosystem II (PSII). PSII is a light-driven water:plastoquinone oxidoreductase that uses light energy to abstract electrons from H(2)O, generating O(2) and a proton gradient subsequently used for ATP formation. It consists of a core antenna complex that captures photons, and an electron transfer chain that converts photonic excitation into a charge separation. This subunit is found at the monomer-monomer interface. This is Photosystem II reaction center protein M from Prochlorococcus marinus (strain MIT 9215).